A 113-amino-acid polypeptide reads, in one-letter code: MNTVRVTFLLVFVLAVSLGQADKDENRMEMQEKTEQGKSYLDFAENLLLQKLEELEAKLLEEDSEESRNSRQKRCIGEGVPCDENVPRCCSGLVCLKPTLHGIWYKSYYCYKK.

The signal sequence occupies residues 1–21 (MNTVRVTFLLVFVLAVSLGQA). The propeptide occupies 22 to 74 (DKDENRMEMQEKTEQGKSYLDFAENLLLQKLEELEAKLLEEDSEESRNSRQKR). Disulfide bonds link cysteine 75–cysteine 90, cysteine 82–cysteine 95, and cysteine 89–cysteine 110.

It belongs to the neurotoxin 14 (magi-1) family. 01 (HNTX-16) subfamily. In terms of tissue distribution, expressed by the venom gland.

It localises to the secreted. Functionally, probable ion channel inhibitor. In Cyriopagopus hainanus (Chinese bird spider), this protein is U11-theraphotoxin-Hhn1u.